A 343-amino-acid chain; its full sequence is Nuclear distribution protein nudE-like 1 (343 aa).

Positions 25 to 190 form a coiled coil; it reads KYKQSFQEAR…LAVRERQQEV (166 aa). Disordered regions lie at residues 184 to 204 and 322 to 343; these read RERQ…LDCE and QGTP…PLSV.

The protein belongs to the nudE family. Post-translationally, phosphorylated in mitosis.

It localises to the cytoplasm. The protein localises to the cytoskeleton. Its subcellular location is the microtubule organizing center. The protein resides in the centrosome. It is found in the spindle. Functionally, required for organization of the cellular microtubule array and microtubule anchoring at the centrosome. Positively regulates the activity of the minus-end directed microtubule motor protein dynein. May enhance dynein-mediated microtubule sliding by targeting dynein to the microtubule plus end. Positively regulates lysosome peripheral distribution and ruffled border formation in osteoclasts. This is Nuclear distribution protein nudE-like 1 (NDEL1) from Gallus gallus (Chicken).